A 553-amino-acid polypeptide reads, in one-letter code: Aminotransferase FUM8 (553 aa).

An N-terminal signal peptide occupies residues 1–25 (MSPAPAILALRRVYNFCLLVDEAHG). A glycan (N-linked (GlcNAc...) asparagine) is linked at Asn-480.

It belongs to the class-II pyridoxal-phosphate-dependent aminotransferase family. BioF subfamily. Pyridoxal 5'-phosphate is required as a cofactor.

Its subcellular location is the endoplasmic reticulum. The protein operates within mycotoxin biosynthesis. Its function is as follows. Aminotransferase; part of the gene cluster that mediates the biosynthesis of fumonisins B1 (FB1), B2 (FB2), B3 (FB3), and B4 (FB4), which are carcinogenic mycotoxins. Within the pathway, FUM8 catalyzes the release of the C-18 polyketide chain from the highly reducing polyketide synthase FUM1 by a nucleophilic attack of a carbanion, which is derived from R-carbon of alanine by decarboxylation, on the carbonyl carbon of polyketide acyl chain. The biosynthesis starts with the FUM1-catalyzed carbon chain assembly from one molecule of acetyl-CoA, eight molecules of malonyl-CoA, and two molecules of methionine (in S-adenosyl form). The C18 polyketide chain is released from the enzyme by a nucleophilic attack of a carbanion, which is derived from R-carbon of alanine by decarboxylation, on the carbonyl carbon of polyketide acyl chain. This step is catalyzed by the pyridoxal 5'-phosphate-dependent aminoacyl transferase FUM8. The resultant 3-keto intermediate is then stereospecifically reduced to a 3-hydroxyl product by reductase FUM13. Subsequent oxidations at C-10 by the cytochrome P450 monooxygenase FUM2, C-14 and C-15 by FUM6, FUM12 or FUM15, tricarballylic esterification of the hydroxyl groups on C-14 and C-15 by acyltransferase FUM14, and C-5 hydroxylation by 2-keto-glutarate-dependent dioxygenase FUM3 furnish the biosynthesis of fumonisins. The tricarballylic moieties are most likely derived from the citric acid cycle, and their addition to the carbon backbone may involve FUM7, FUM10, FUM11 and FUM14. This Gibberella moniliformis (strain M3125 / FGSC 7600) (Maize ear and stalk rot fungus) protein is Aminotransferase FUM8.